Consider the following 60-residue polypeptide: Large ribosomal subunit protein bL32 (60 aa).

Over residues 1 to 20 the composition is skewed to basic residues; that stretch reads MAVPKRKTSPSRRNMRRSHH. The disordered stretch occupies residues 1-60; it reads MAVPKRKTSPSRRNMRRSHHALGANSFIEDKDTGELRRPHHVDLKTGMYNGKQILTPKED. Basic and acidic residues predominate over residues 28 to 44; sequence IEDKDTGELRRPHHVDL.

The protein belongs to the bacterial ribosomal protein bL32 family.

This chain is Large ribosomal subunit protein bL32, found in Caulobacter vibrioides (strain ATCC 19089 / CIP 103742 / CB 15) (Caulobacter crescentus).